Here is a 124-residue protein sequence, read N- to C-terminus: Large ribosomal subunit protein bL12 (124 aa).

It belongs to the bacterial ribosomal protein bL12 family. Homodimer. Part of the ribosomal stalk of the 50S ribosomal subunit. Forms a multimeric L10(L12)X complex, where L10 forms an elongated spine to which 2 to 4 L12 dimers bind in a sequential fashion. Binds GTP-bound translation factors.

In terms of biological role, forms part of the ribosomal stalk which helps the ribosome interact with GTP-bound translation factors. Is thus essential for accurate translation. The protein is Large ribosomal subunit protein bL12 of Cupriavidus metallidurans (strain ATCC 43123 / DSM 2839 / NBRC 102507 / CH34) (Ralstonia metallidurans).